Consider the following 212-residue polypeptide: Pyrrolidone-carboxylate peptidase (212 aa).

Residues Glu78, Cys141, and His165 contribute to the active site.

The protein belongs to the peptidase C15 family. Homotetramer.

It is found in the cytoplasm. The catalysed reaction is Release of an N-terminal pyroglutamyl group from a polypeptide, the second amino acid generally not being Pro.. Its function is as follows. Removes 5-oxoproline from various penultimate amino acid residues except L-proline. This Staphylococcus aureus (strain bovine RF122 / ET3-1) protein is Pyrrolidone-carboxylate peptidase.